The primary structure comprises 56 residues: Small ribosomal subunit protein uS14 (56 aa).

Zn(2+) is bound by residues cysteine 21, cysteine 24, cysteine 39, and cysteine 42.

Belongs to the universal ribosomal protein uS14 family. The cofactor is Zn(2+).

This chain is Small ribosomal subunit protein uS14 (RPS29), found in Triticum aestivum (Wheat).